A 111-amino-acid polypeptide reads, in one-letter code: C-X-C motif chemokine 14 (111 aa).

Residues 1–34 (MSLLPRRAPPVSMRLLAAALLLLLLALYTARVDG) form the signal peptide. 2 cysteine pairs are disulfide-bonded: cysteine 37–cysteine 63 and cysteine 39–cysteine 84. Residues 67-81 (MVIITTKSVSRYRGQ) carry the D-box motif.

This sequence belongs to the intercrine alpha (chemokine CxC) family. In terms of processing, ubiquitinated, followed by degradation by the proteasome. As to expression, expressed in heart, brain, placenta, lung, liver, skeletal muscle, kidney and pancreas. Highly expressed in normal tissue without inflammatory stimuli and infrequently expressed in cancer cell lines. Weakly expressed in monocyte-derived dendritic cells. Not detected in lung or unstimulated peripheral blood lymphocytes.

The protein resides in the secreted. In terms of biological role, potent chemoattractant for neutrophils, and weaker for dendritic cells. Not chemotactic for T-cells, B-cells, monocytes, natural killer cells or granulocytes. Does not inhibit proliferation of myeloid progenitors in colony formation assays. The chain is C-X-C motif chemokine 14 (CXCL14) from Homo sapiens (Human).